The following is a 214-amino-acid chain: Melanoregulin (214 aa).

A Cholesterol-binding sequence motif motif is present at residues 162–172; the sequence is LSERYLFVVDR. At Ser-213 the chain carries Phosphoserine.

Belongs to the melanoregulin family. In terms of assembly, identified in a complex with RILP and DCTN1; interacts directly with RILP, but does not interact directly with DCTN1. Interacts with PRPH2. Palmitoylated. Palmitoylation is required to maintain the protein at the melanosome membrane. In terms of tissue distribution, expressed in photoreceptor cells (at protein level).

Its subcellular location is the apical cell membrane. The protein localises to the melanosome membrane. It is found in the lysosome membrane. It localises to the cytoplasmic vesicle membrane. In terms of biological role, probably functions as a cargo-recognition protein that couples cytoplasmic vesicles to the transport machinery. Plays a role in hair pigmentation, a process that involves shedding of melanosome-containing vesicles from melanocytes, followed by phagocytosis of the melanosome-containing vesicles by keratinocytes. Functions on melanosomes as receptor for RILP and the complex formed by RILP and DCTN1, and thereby contributes to retrograde melanosome transport from the cell periphery to the center. Overexpression causes accumulation of late endosomes and/or lysosomes at the microtubule organising center (MTOC) at the center of the cell. Probably binds cholesterol and requires the presence of cholesterol in membranes to function in microtubule-mediated retrograde organelle transport. Binds phosphatidylinositol 3-phosphate, phosphatidylinositol 4-phosphate, phosphatidylinositol 5-phosphate and phosphatidylinositol 3,5-bisphosphate, but not phosphatidylinositol 3,4-bisphosphate or phosphatidylinositol 4,5-bisphosphate. Required for normal phagosome clearing and normal activation of lysosomal enzymes in lysosomes from retinal pigment epithelium cells. Required for normal degradation of the lipofuscin component N-retinylidene-N-retinylethanolamine (A2E) in the eye. May function in membrane fusion and regulate the biogenesis of disk membranes of photoreceptor rod cells. The sequence is that of Melanoregulin (MREG) from Homo sapiens (Human).